We begin with the raw amino-acid sequence, 673 residues long: Sodium/myo-inositol cotransporter 2 (673 aa).

Residues 1–27 are Extracellular-facing; it reads MESATISPQPPQSDSLEAFPQKSMEPA. Residues 28–48 form a helical membrane-spanning segment; the sequence is DIAVLVLYFLFVLAVGLWSTV. The Cytoplasmic segment spans residues 49-65; sequence RTKRDTVKGYFLAGGDM. The helical transmembrane segment at 66–88 threads the bilayer; it reads VWWPVGASLFASNVGSGHFIGLA. At 89–102 the chain is on the extracellular side; sequence GSGAAVGISVAAYE. Residues 103-123 form a helical membrane-spanning segment; sequence LNGLFSVLMLAWVFLPIYIAG. The Cytoplasmic portion of the chain corresponds to 124 to 148; that stretch reads QVTTMPEYLRRRFGGNRISITLAVL. A helical transmembrane segment spans residues 149–169; that stretch reads YLFIYIFTKISVDMYAGAIFI. The Extracellular portion of the chain corresponds to 170–180; it reads QQSLHLDLYLA. The helical transmembrane segment at 181–201 threads the bilayer; sequence IVGLLAITALYTVAGGLAAVI. Residues 202-208 are Cytoplasmic-facing; the sequence is YTDALQT. The helical transmembrane segment at 209 to 229 threads the bilayer; that stretch reads VIMLIGAFILMGYSFAAVGGM. Residues 230–272 lie on the Extracellular side of the membrane; the sequence is EGLKDQYFLALASNRSENSSCGLPREDAFHIFRDPLTSDLPWP. A helical membrane pass occupies residues 273-293; the sequence is GILFGMSIPSLWYWCTDQVIV. Over 294–308 the chain is Cytoplasmic; sequence QRSLAAKNLSHAKGG. Residues 309 to 329 form a helical membrane-spanning segment; it reads SLMAAYLKVLPLFLMVFPGMV. Topologically, residues 330-375 are extracellular; it reads SRVLFPDQVACAHPDICQRVCSNPSGCSDIAYPKLVLELLPTGLRG. Residues 376-396 form a helical membrane-spanning segment; the sequence is LMMAVMVAALMSSLTSIFNSA. Residues 397 to 418 lie on the Cytoplasmic side of the membrane; sequence STIFTMDLWNHIRPRASERELM. The helical transmembrane segment at 419–439 threads the bilayer; that stretch reads IVGRIFVFALVLVSILWIPIV. Topologically, residues 440–446 are extracellular; it reads QASQGGQ. A helical transmembrane segment spans residues 447–467; the sequence is LFIYIQSISSYLQPPVAMVFI. The Cytoplasmic segment spans residues 468–479; it reads MGCFWKRTNEKG. Residues 480-500 traverse the membrane as a helical segment; it reads AFSGLILGLLLGLVRLILDFV. The Extracellular portion of the chain corresponds to 501 to 521; it reads YAQPRCDQPDDRPAVVKDVHY. A helical transmembrane segment spans residues 522 to 542; it reads LYFSMILSFTTLITVVTVSWF. Topologically, residues 543–652 are cytoplasmic; it reads TETPSKEMVS…SLEENPLVKT (110 aa). The helical transmembrane segment at 653–673 threads the bilayer; the sequence is LLDVNCIVCISCAIFLWGYFA.

The protein belongs to the sodium:solute symporter (SSF) (TC 2.A.21) family.

Its subcellular location is the membrane. It is found in the apical cell membrane. It carries out the reaction myo-inositol(out) + 2 Na(+)(out) = myo-inositol(in) + 2 Na(+)(in). The catalysed reaction is 1D-chiro-inositol(out) + 2 Na(+)(out) = 1D-chiro-inositol(in) + 2 Na(+)(in). The enzyme catalyses D-glucose(out) + 2 Na(+)(out) = D-glucose(in) + 2 Na(+)(in). It catalyses the reaction D-xylose(out) + 2 Na(+)(out) = D-xylose(in) + 2 Na(+)(in). Its activity is regulated as follows. MI transport activity inhibited by D-chiro-inositol (DCI), phlorizin (Pz) and sodium (Na(+)). Insulin increases D-chiro-inositol uptake. Involved in the sodium-dependent cotransport of myo-inositol (MI) with a Na(+):MI stoichiometry of 2:1. Exclusively responsible for apical MI transport and absorption in intestine. Can also transport D-chiro-inositol (DCI) but not L-fucose. Exhibits stereospecific cotransport of both D-glucose and D-xylose. May induce apoptosis through the TNF-alpha, PDCD1 pathway. May play a role in the regulation of MI concentration in serum, involving reabsorption in at least the proximal tubule of the kidney. The polypeptide is Sodium/myo-inositol cotransporter 2 (Mus musculus (Mouse)).